The following is a 191-amino-acid chain: LOB domain-containing protein 19 (191 aa).

Residues glycine 15 to leucine 117 enclose the LOB domain.

Belongs to the LOB domain-containing protein family. In terms of tissue distribution, expressed in shoots, roots and floral tissues, but not in stems or leaves.

This Arabidopsis thaliana (Mouse-ear cress) protein is LOB domain-containing protein 19 (LBD19).